Consider the following 109-residue polypeptide: MLFYLEEPIRGYVIILIVHPSWNDCATGHILIMLLNWHEQKEEGQHLLYLFIKHNQGYTLNILRYLLDRFDIQKDEYYNTAFQNCNNNVASYIGYDINLPTKDGIRLGV.

This is an uncharacterized protein from Bos taurus (Bovine).